The following is a 1412-amino-acid chain: Probable phosphatidylinositol 4-kinase STT4 homolog (1412 aa).

In terms of domain architecture, PIK helical spans 878 to 1055 (SMETNGFYRF…GTFVRCIEEI (178 aa)). The interval 1056–1163 (MKEMPDGSRD…ISIKQLIFKS (108 aa)) is pleckstrin homology (PH) domain conferring phosphoinositide binding specificity. Positions 1127 to 1396 (NGSARALQSH…LIAESSQKFR (270 aa)) constitute a PI3K/PI4K catalytic domain. Residues 1133–1139 (LQSHSKV) form a G-loop region. The interval 1266–1274 (NIKDRHNGN) is catalytic loop. Positions 1285–1308 (HIDFGYMLEMSPGNLNIEAPLKLT) are activation loop.

This sequence belongs to the PI3/PI4-kinase family. Type III PI4K subfamily.

It is found in the cytoplasm. The catalysed reaction is a 1,2-diacyl-sn-glycero-3-phospho-(1D-myo-inositol) + ATP = a 1,2-diacyl-sn-glycero-3-phospho-(1D-myo-inositol 4-phosphate) + ADP + H(+). Functionally, acts on phosphatidylinositol (PI) in the first committed step in the production of the second messenger inositol 1,4,5,-trisphosphate. The chain is Probable phosphatidylinositol 4-kinase STT4 homolog (STT4) from Encephalitozoon cuniculi (strain GB-M1) (Microsporidian parasite).